Consider the following 377-residue polypeptide: Nitric oxide reductase FlRd-NAD(+) reductase (377 aa).

The protein belongs to the FAD-dependent oxidoreductase family. FAD serves as cofactor.

The protein resides in the cytoplasm. It catalyses the reaction 2 reduced [nitric oxide reductase rubredoxin domain] + NAD(+) + H(+) = 2 oxidized [nitric oxide reductase rubredoxin domain] + NADH. It functions in the pathway nitrogen metabolism; nitric oxide reduction. One of at least two accessory proteins for anaerobic nitric oxide (NO) reductase. Reduces the rubredoxin moiety of NO reductase. The sequence is that of Nitric oxide reductase FlRd-NAD(+) reductase from Salmonella gallinarum (strain 287/91 / NCTC 13346).